A 278-amino-acid chain; its full sequence is MNILNIYNEFDINNFDLSVDHYGSEKCDRGYSFGPTIRDNYVIHFILEGKGKLTINQHTLDLAAGDIFLLPKDISTFYQADLQMPWSYIWIGFSGSKAENILKQSSLFKRFYCHSGRSSKLFSQMMTIIQFANTPLTSVNELLMVGELYKLLAALIEEFPLSHLEESNSSTKAYVNQVKKIIHSQYGSSLRVNDIAKKLNLSRSYLYKIFRKSTNLSIKEYILQVRMKRSQYLLENPKLSIAEISNSVGFSDSLAFSKAFKNYFGKSPSKFRKEIQNN.

In terms of domain architecture, HTH araC/xylS-type spans 176-274 (NQVKKIIHSQ…GKSPSKFRKE (99 aa)). 2 DNA-binding regions (H-T-H motif) span residues 193-214 (NDIAKKLNLSRSYLYKIFRKST) and 241-264 (IAEISNSVGFSDSLAFSKAFKNYF).

In terms of biological role, regulatory protein for the msm operon for multiple sugar metabolism. Activates the transcription of the msmEFGK, aga, dexB and gftA genes. This is Msm operon regulatory protein (msmR) from Streptococcus mutans serotype c (strain ATCC 700610 / UA159).